The chain runs to 197 residues: Ribonuclease HII (197 aa).

An RNase H type-2 domain is found at 9-197; the sequence is ELIAGVDEVG…APVKKALEQF (189 aa). Residues aspartate 15, glutamate 16, and aspartate 107 each contribute to the a divalent metal cation site.

It belongs to the RNase HII family. The cofactor is Mn(2+). It depends on Mg(2+) as a cofactor.

It is found in the cytoplasm. The catalysed reaction is Endonucleolytic cleavage to 5'-phosphomonoester.. Endonuclease that specifically degrades the RNA of RNA-DNA hybrids. The sequence is that of Ribonuclease HII from Haemophilus influenzae (strain 86-028NP).